A 131-amino-acid polypeptide reads, in one-letter code: Profilin-1 (131 aa).

Belongs to the profilin family. In terms of assembly, occurs in many kinds of cells as a complex with monomeric actin in a 1:1 ratio.

It localises to the cytoplasm. Its subcellular location is the cytoskeleton. In terms of biological role, binds to actin and affects the structure of the cytoskeleton. At high concentrations, profilin prevents the polymerization of actin, whereas it enhances it at low concentrations. By binding to PIP2, it inhibits the formation of IP3 and DG. The polypeptide is Profilin-1 (PRO1) (Triticum aestivum (Wheat)).